The following is a 350-amino-acid chain: Lipoyl synthase, mitochondrial (350 aa).

[4Fe-4S] cluster-binding residues include Cys-83, Cys-88, Cys-94, Cys-113, Cys-117, Cys-120, and Ser-328. In terms of domain architecture, Radical SAM core spans 96 to 317 (GGESGTATAT…EKVGNELGFA (222 aa)).

The protein belongs to the radical SAM superfamily. Lipoyl synthase family. [4Fe-4S] cluster serves as cofactor.

The protein resides in the mitochondrion. The catalysed reaction is [[Fe-S] cluster scaffold protein carrying a second [4Fe-4S](2+) cluster] + N(6)-octanoyl-L-lysyl-[protein] + 2 oxidized [2Fe-2S]-[ferredoxin] + 2 S-adenosyl-L-methionine + 4 H(+) = [[Fe-S] cluster scaffold protein] + N(6)-[(R)-dihydrolipoyl]-L-lysyl-[protein] + 4 Fe(3+) + 2 hydrogen sulfide + 2 5'-deoxyadenosine + 2 L-methionine + 2 reduced [2Fe-2S]-[ferredoxin]. The protein operates within protein modification; protein lipoylation via endogenous pathway; protein N(6)-(lipoyl)lysine from octanoyl-[acyl-carrier-protein]: step 2/2. Catalyzes the radical-mediated insertion of two sulfur atoms into the C-6 and C-8 positions of the octanoyl moiety bound to the lipoyl domains of lipoate-dependent enzymes, thereby converting the octanoylated domains into lipoylated derivatives. The sequence is that of Lipoyl synthase, mitochondrial from Trichoplax adhaerens (Trichoplax reptans).